Consider the following 125-residue polypeptide: Outer membrane protein assembly factor BamE (125 aa).

A signal peptide spans 1 to 17 (MNKTLILALSALLGLAA). The N-palmitoyl cysteine moiety is linked to residue cysteine 18. Residue cysteine 18 is the site of S-diacylglycerol cysteine attachment.

Belongs to the BamE family. As to quaternary structure, part of the Bam complex.

The protein resides in the cell outer membrane. In terms of biological role, part of the outer membrane protein assembly complex, which is involved in assembly and insertion of beta-barrel proteins into the outer membrane. This Neisseria meningitidis serogroup B (strain ATCC BAA-335 / MC58) protein is Outer membrane protein assembly factor BamE.